The sequence spans 125 residues: Linear element protein rec27 (125 aa).

Residues Lys45–Gln104 are a coiled coil.

As to quaternary structure, component of linear elements (LinEs), which are similar to synaptonemal complexes, at least composed of rec27, rec25, rec10 and mug20.

It localises to the cytoplasm. It is found in the nucleus. The protein localises to the chromosome. Functionally, during meiotic DNA recombination, binds to and activates DNA double-strand break (DSB) hotspot sites. This Schizosaccharomyces pombe (strain 972 / ATCC 24843) (Fission yeast) protein is Linear element protein rec27.